We begin with the raw amino-acid sequence, 374 residues long: F-box/LRR-repeat protein 8 (374 aa).

The 47-residue stretch at 2–48 (AEPGEGLPEEVLALIFRHLSLRDRAAAARVCRAWAAAATCSAVWHDT) folds into the F-box domain.

In terms of assembly, directly interacts with SKP1 and CUL1.

In terms of biological role, substrate-recognition component of the SCF (SKP1-CUL1-F-box protein)-type E3 ubiquitin ligase complex. In Homo sapiens (Human), this protein is F-box/LRR-repeat protein 8 (FBXL8).